A 460-amino-acid polypeptide reads, in one-letter code: Orexin receptor type 2 (460 aa).

At 1–54 (MSSTKLEDSLPRRNWSSASELNETQEPFLNPTDYDDEEFLRYLWREYLHPKEYE) the chain is on the extracellular side. N-linked (GlcNAc...) asparagine glycosylation is found at N14 and N22. The segment at 33–49 (DYDDEEFLRYLWREYLH) is required for response to orexin-A. A helical transmembrane segment spans residues 55 to 75 (WVLIAGYIIVFVVALIGNVLV). Topologically, residues 76–88 (CVAVWKNHHMRTV) are cytoplasmic. The helical transmembrane segment at 89–110 (TNYFIVNLSLADVLVTITCLPA) threads the bilayer. The Extracellular segment spans residues 111–127 (TLVVDITETWFFGQSLC). Cysteines 127 and 210 form a disulfide. The helical transmembrane segment at 128-150 (KVIPYLQTVSVSVSVLTLSCIAL) threads the bilayer. Topologically, residues 151–170 (DRWYAICHPLMFKSTAKRAR) are cytoplasmic. A helical transmembrane segment spans residues 171–191 (NSIVVIWIVSCIIMIPQAIVM). Over 192-222 (ERSSMLPGLANKTTLFTVCDERWGGEVYPKM) the chain is Extracellular. N202 is a glycosylation site (N-linked (GlcNAc...) asparagine). The helical transmembrane segment at 223-243 (YHICFFLVTYMAPLCLMVLAY) threads the bilayer. The Cytoplasmic segment spans residues 244–304 (LQIFRKLWCR…QIRARRKTAR (61 aa)). A helical membrane pass occupies residues 305 to 326 (MLMVVLLVFAICYLPISILNVL). Residues 327–342 (KRVFGMFTHTEDRETV) lie on the Extracellular side of the membrane. Residues 343–366 (YAWFTFSHWLVYANSAANPIIYNF) form a helical membrane-spanning segment. Residues 367–460 (LSGKFREEFK…SSLLSTWLEV (94 aa)) are Cytoplasmic-facing.

It belongs to the G-protein coupled receptor 1 family. As to expression, expressed in the brain in the cerebral cortex, septal nuclei, hippocampus, medial thalamic groups, dorsal and median raphe nuclei, and many hypothalamic nuclei including the tuberomammillary nucleus, dorsomedial hypothalamus, paraventricular hypothalamic nucleus, and ventral premammillary nucleus. Not detected in the spleen, lung, liver, skeletal muscle, kidney and testis. Orexin receptor mRNA expression has also been reported in the adrenal gland, enteric nervous system, and pancreas.

It is found in the cell membrane. Nonselective, high-affinity receptor for both orexin-A and orexin-B neuropeptides. Triggers an increase in cytoplasmic Ca(2+) levels in response to orexin-A binding. In Rattus norvegicus (Rat), this protein is Orexin receptor type 2 (Hcrtr2).